The sequence spans 102 residues: NADH-quinone oxidoreductase subunit K (102 aa).

3 helical membrane passes run 5–25 (LAHYLAVAAILFTIGVFGIFV), 30–50 (IIVILMSIELILLAVNINLVA), and 62–82 (IFAMFVLTVAAAEAAVGLAIL).

The protein belongs to the complex I subunit 4L family. In terms of assembly, NDH-1 is composed of 14 different subunits. Subunits NuoA, H, J, K, L, M, N constitute the membrane sector of the complex.

Its subcellular location is the cell inner membrane. It catalyses the reaction a quinone + NADH + 5 H(+)(in) = a quinol + NAD(+) + 4 H(+)(out). In terms of biological role, NDH-1 shuttles electrons from NADH, via FMN and iron-sulfur (Fe-S) centers, to quinones in the respiratory chain. The immediate electron acceptor for the enzyme in this species is believed to be ubiquinone. Couples the redox reaction to proton translocation (for every two electrons transferred, four hydrogen ions are translocated across the cytoplasmic membrane), and thus conserves the redox energy in a proton gradient. This Phenylobacterium zucineum (strain HLK1) protein is NADH-quinone oxidoreductase subunit K.